Consider the following 347-residue polypeptide: Haptoglobin (347 aa).

The signal sequence occupies residues 1 to 18 (MRALGAVVALLLCGQLFA). In terms of domain architecture, Sushi spans 31–88 (DSCPKPPEIPKGYVEHMVRYHCQTYYKLRTAGDGVYTLDSNKQWTNKVTGEKLPECEA). Disulfide bonds link Cys52–Cys86 and Cys90–Cys207. Residues 103 to 345 (IMGGSLDAKG…ILDWIQTTIA (243 aa)) enclose the Peptidase S1 domain. N-linked (GlcNAc...) asparagine glycosylation is found at Asn125, Asn151, Asn183, and Asn232. 2 disulfides stabilise this stretch: Cys250–Cys281 and Cys292–Cys322. The tract at residues 259–264 (VPEKKT) is interaction with CD163.

It belongs to the peptidase S1 family. As to quaternary structure, tetramer of two alpha and two beta chains; disulfide-linked. The hemoglobin/haptoglobin complex is composed of a haptoglobin dimer bound to two hemoglobin alpha-beta dimers. Interacts with CD163. Interacts with ERGIC3. Expressed by the liver and secreted in plasma.

The protein resides in the secreted. In terms of biological role, as a result of hemolysis, hemoglobin is found to accumulate in the kidney and is secreted in the urine. Haptoglobin captures, and combines with free plasma hemoglobin to allow hepatic recycling of heme iron and to prevent kidney damage. Haptoglobin also acts as an antioxidant, has antibacterial activity and plays a role in modulating many aspects of the acute phase response. Hemoglobin/haptoglobin complexes are rapidly cleared by the macrophage CD163 scavenger receptor expressed on the surface of liver Kupfer cells through an endocytic lysosomal degradation pathway. This Sus scrofa (Pig) protein is Haptoglobin (HP).